The primary structure comprises 116 residues: Phosphoribosyl-AMP cyclohydrolase (116 aa).

Position 85 (Asp-85) interacts with Mg(2+). Cys-86 serves as a coordination point for Zn(2+). 2 residues coordinate Mg(2+): Asp-87 and Asp-89. Zn(2+) is bound by residues Cys-102 and Cys-109.

Belongs to the PRA-CH family. In terms of assembly, homodimer. The cofactor is Mg(2+). Zn(2+) serves as cofactor.

The protein localises to the cytoplasm. It carries out the reaction 1-(5-phospho-beta-D-ribosyl)-5'-AMP + H2O = 1-(5-phospho-beta-D-ribosyl)-5-[(5-phospho-beta-D-ribosylamino)methylideneamino]imidazole-4-carboxamide. Its pathway is amino-acid biosynthesis; L-histidine biosynthesis; L-histidine from 5-phospho-alpha-D-ribose 1-diphosphate: step 3/9. Catalyzes the hydrolysis of the adenine ring of phosphoribosyl-AMP. This is Phosphoribosyl-AMP cyclohydrolase from Thermobifida fusca (strain YX).